We begin with the raw amino-acid sequence, 128 residues long: uncharacterized protein (128 aa).

Basic and acidic residues predominate over residues 1-28; sequence MDADDFGKKDLENGNESPKKPIFMKDWK. The disordered stretch occupies residues 1–30; the sequence is MDADDFGKKDLENGNESPKKPIFMKDWKNS.

The protein localises to the cytoplasm. It localises to the nucleus. This is an uncharacterized protein from Schizosaccharomyces pombe (strain 972 / ATCC 24843) (Fission yeast).